The primary structure comprises 253 residues: ER membrane protein complex subunit 3 (253 aa).

3 consecutive transmembrane segments (helical) span residues 10-30 (WVLL…QYIM), 126-146 (FIPQ…FILM), and 176-196 (SISW…LIGL).

Belongs to the EMC3 family. Component of the ER membrane protein complex (EMC), which is composed of EMC1, EMC2, EMC3, EMC4, EMC5 and EMC6.

The protein localises to the endoplasmic reticulum membrane. The EMC seems to be required for efficient folding of proteins in the endoplasmic reticulum (ER). In Saccharomyces cerevisiae (strain RM11-1a) (Baker's yeast), this protein is ER membrane protein complex subunit 3 (AIM27).